A 222-amino-acid polypeptide reads, in one-letter code: Noggin (222 aa).

A signal peptide spans 1–19 (MDHSQCLVTIYALMVFLGL). Asparagine 61 carries N-linked (GlcNAc...) asparagine glycosylation. Disulfide bonds link cysteine 145–cysteine 182, cysteine 168–cysteine 218, cysteine 174–cysteine 220, and cysteine 197–cysteine 205.

The protein belongs to the noggin family. Homodimer.

The protein resides in the secreted. In terms of biological role, patterns the embryo by interrupting bone morphogenetic proteins (BMP) signaling. Binds BMP-4 and BMP-2 with high affinity. Can abolish BMP-4 activity by blocking binding to cognate cell-surface receptors. Capable of inducing dorsal development in embryos. Causes dorsal mesodermal differentiation of animal cap ectoderm when coexpressed with xWNT-8 and nuclear, sequence-specific DNA-binding protein xBRA. None of these molecules causes dorsal mesoderm formation when expressed alone. The sequence is that of Noggin (nog) from Xenopus laevis (African clawed frog).